We begin with the raw amino-acid sequence, 159 residues long: Globin CTT-W (159 aa).

The signal sequence occupies residues 1-16 (MKFLVILTLCIAGAIA). The Globin domain occupies 17–159 (HCDKAPFIKA…HHAIVYSILE (143 aa)). Residues His73 and His108 each coordinate heme b.

Belongs to the globin family.

The polypeptide is Globin CTT-W (CTT-W) (Chironomus thummi thummi (Midge)).